The primary structure comprises 447 residues: Probable glycine dehydrogenase (decarboxylating) subunit 1 (447 aa).

It belongs to the GcvP family. N-terminal subunit subfamily. In terms of assembly, the glycine cleavage system is composed of four proteins: P, T, L and H. In this organism, the P 'protein' is a heterodimer of two subunits.

It carries out the reaction N(6)-[(R)-lipoyl]-L-lysyl-[glycine-cleavage complex H protein] + glycine + H(+) = N(6)-[(R)-S(8)-aminomethyldihydrolipoyl]-L-lysyl-[glycine-cleavage complex H protein] + CO2. Functionally, the glycine cleavage system catalyzes the degradation of glycine. The P protein binds the alpha-amino group of glycine through its pyridoxal phosphate cofactor; CO(2) is released and the remaining methylamine moiety is then transferred to the lipoamide cofactor of the H protein. This is Probable glycine dehydrogenase (decarboxylating) subunit 1 from Bacillus mycoides (strain KBAB4) (Bacillus weihenstephanensis).